A 227-amino-acid chain; its full sequence is Protein FAM3C (227 aa).

The N-terminal stretch at M1–S24 is a signal peptide. Cystine bridges form between C58/C86 and C64/C221. The GG-type lectin domain occupies K67 to K225.

Belongs to the FAM3 family.

The protein resides in the secreted. It is found in the cytoplasmic vesicle. In terms of biological role, may be involved in retinal laminar formation. Promotes epithelial to mesenchymal transition. This chain is Protein FAM3C (FAM3C), found in Bos taurus (Bovine).